Consider the following 463-residue polypeptide: Glutamate--tRNA ligase (463 aa).

Residues 10 to 20 carry the 'HIGH' region motif; that stretch reads PSPTGHLHIGG. The 'KMSKS' region motif lies at 236-240; the sequence is KLSKR. ATP is bound at residue Lys239.

The protein belongs to the class-I aminoacyl-tRNA synthetase family. Glutamate--tRNA ligase type 1 subfamily. As to quaternary structure, monomer.

The protein resides in the cytoplasm. The catalysed reaction is tRNA(Glu) + L-glutamate + ATP = L-glutamyl-tRNA(Glu) + AMP + diphosphate. Catalyzes the attachment of glutamate to tRNA(Glu) in a two-step reaction: glutamate is first activated by ATP to form Glu-AMP and then transferred to the acceptor end of tRNA(Glu). In Nitratidesulfovibrio vulgaris (strain DP4) (Desulfovibrio vulgaris), this protein is Glutamate--tRNA ligase.